The sequence spans 443 residues: Arginine biosynthesis bifunctional protein ArgJ, mitochondrial (443 aa).

6 residues coordinate substrate: Thr-179, Lys-206, Thr-217, Glu-303, Asn-438, and Ser-443. The active-site Nucleophile is Thr-217.

It belongs to the ArgJ family. As to quaternary structure, heterodimer of an alpha and a beta chain. Post-translationally, the alpha and beta chains are autoproteolytically processed from a single precursor protein within the mitochondrion.

Its subcellular location is the mitochondrion matrix. The enzyme catalyses N(2)-acetyl-L-ornithine + L-glutamate = N-acetyl-L-glutamate + L-ornithine. It catalyses the reaction L-glutamate + acetyl-CoA = N-acetyl-L-glutamate + CoA + H(+). Its pathway is amino-acid biosynthesis; L-arginine biosynthesis; L-ornithine and N-acetyl-L-glutamate from L-glutamate and N(2)-acetyl-L-ornithine (cyclic): step 1/1. It functions in the pathway amino-acid biosynthesis; L-arginine biosynthesis; N(2)-acetyl-L-ornithine from L-glutamate: step 1/4. Functionally, catalyzes two activities which are involved in the cyclic version of arginine biosynthesis: the synthesis of acetylglutamate from glutamate and acetyl-CoA, and of ornithine by transacetylation between acetylornithine and glutamate. The sequence is that of Arginine biosynthesis bifunctional protein ArgJ, mitochondrial from Eremothecium gossypii (strain ATCC 10895 / CBS 109.51 / FGSC 9923 / NRRL Y-1056) (Yeast).